The following is a 668-amino-acid chain: Golgin subfamily A member 6-like protein 1 (668 aa).

Disordered regions lie at residues 1 to 120 (MLMW…HQEA), 323 to 356 (IREQ…RQEE), 384 to 466 (EKMH…EMWR), 481 to 591 (KEKM…REQE), and 603 to 639 (EQEE…MRRQ). Residues 15–41 (LPTHPHLPTHPHLPTHPHLPTHPHLPT) show a composition bias toward basic residues. The span at 51–72 (MSKETRQSKLAEAKEQLTDHHP) shows a compositional bias: basic and acidic residues. Polar residues-rich tracts occupy residues 73 to 83 (QTNPSVGTAAS) and 91 to 103 (NNGT…TSGG). Basic and acidic residues predominate over residues 106–120 (SPEDEQKASHQHQEA). Positions 177 to 663 (LEQALSAVAT…EEKMQEHQEH (487 aa)) form a coiled coil.

This sequence belongs to the GOLGA6 family.

This is Golgin subfamily A member 6-like protein 1 (GOLGA6L1) from Homo sapiens (Human).